The primary structure comprises 442 residues: tRNA modification GTPase MnmE (442 aa).

(6S)-5-formyl-5,6,7,8-tetrahydrofolate-binding residues include R22, E79, and K118. The TrmE-type G domain occupies 215-365 (EIPIAIVGRP…LEKAILFEYQ (151 aa)). Position 225 (N225) interacts with K(+). GTP contacts are provided by residues 225–230 (NVGKSS), 244–250 (TNIEGTT), and 269–272 (DTAG). S229 lines the Mg(2+) pocket. Residues T244, I246, and T249 each coordinate K(+). Position 250 (T250) interacts with Mg(2+). (6S)-5-formyl-5,6,7,8-tetrahydrofolate is bound at residue K442.

It belongs to the TRAFAC class TrmE-Era-EngA-EngB-Septin-like GTPase superfamily. TrmE GTPase family. Homodimer. Heterotetramer of two MnmE and two MnmG subunits. The cofactor is K(+).

Its subcellular location is the cytoplasm. Exhibits a very high intrinsic GTPase hydrolysis rate. Involved in the addition of a carboxymethylaminomethyl (cmnm) group at the wobble position (U34) of certain tRNAs, forming tRNA-cmnm(5)s(2)U34. This Mycoplasmopsis pulmonis (strain UAB CTIP) (Mycoplasma pulmonis) protein is tRNA modification GTPase MnmE.